Reading from the N-terminus, the 460-residue chain is MNRTKGDEEEYWNSSKFKAFTFDDEDDELSQLKESKRAVNSLRDFVDDDDDDDLERVSWTGEPVGSISWSIKETAGSSGSTSEGREQMKGRNSFYTQLPKPPSTYSLSSFFRGRTRPGSFQSLSDALSDTPAKTYSPELGRPKGEYRDYSNDWSLSDTVRRLRQGKVLIFLKRTLSKEILFRELEVRQVALRHLIHFLKEIGDQKLLLDLFRFLDRTEELALSHYREHLNIQDPEKRKEFLKTCIGLPFSAEDSAHVQDQYTLLERQIIIEANDRHLESSGQTEIFRKHPRKASILNMPLVTTLFYACFYHYTESEGTFSSPVNLKKTFKIPDRQYVLTALAARAKLRAWNDVDALFTTKNWLGYTKKRAPIGFHRVVEILHKNSAPVQILQEYVNLVEDVDTKLNLATKFKCHDVVIDTCRDLKDRQQLLAYRSKVDKGSAEEEKIDVILSSSQIRWKN.

Phosphothreonine is present on threonine 21. The tract at residues 70–101 is disordered; that stretch reads SIKETAGSSGSTSEGREQMKGRNSFYTQLPKP. The span at 73-82 shows a compositional bias: low complexity; it reads ETAGSSGSTS. Phosphothreonine is present on threonine 115. 3 positions are modified to phosphoserine: serine 119, serine 122, and serine 128. Polar residues predominate over residues 121-133; it reads QSLSDALSDTPAK. The interval 121–141 is disordered; the sequence is QSLSDALSDTPAKTYSPELGR. Position 130 is a phosphothreonine (threonine 130).

Belongs to the SPE39 family. As to quaternary structure, interacts with VPS33B. Associates with the homotypic fusion and vacuole protein sorting (HOPS) complex; impaired by VPS33B. Interacts with RAB11A.

Its subcellular location is the cytoplasm. It localises to the cytoplasmic vesicle. The protein localises to the early endosome. It is found in the recycling endosome. The protein resides in the late endosome. Functionally, proposed to be involved in endosomal maturation implicating in part VPS33B. In epithelial cells, the VPS33B:VIPAS39 complex may play a role in the apical RAB11A-dependent recycling pathway and in the maintenance of the apical-basolateral polarity. May play a role in lysosomal trafficking, probably via association with the core HOPS complex in a discrete population of endosomes; the functions seems to be independent of VPS33B. May play a role in vesicular trafficking during spermatogenesis. May be involved in direct or indirect transcriptional regulation of E-cadherin. The protein is Spermatogenesis-defective protein 39 homolog (Vipas39) of Rattus norvegicus (Rat).